The following is a 281-amino-acid chain: MSDTVSVETVASAIDALRDQVPLVQSLTNIVSANFLTNVLLAAGASNAHIDNVHEAGGFAAVAGGVLVNLGTPDDGTAEAFLISAEAARTAGTPWVLDPVGVGGLPWRSGIAVDLLRFHPSAIRGNASEIIALAGLGGDTRGVDSASDSADAVPAALSLLTHADAVSASGPVDYIVGRDGGGDVRGIRVSGGSALLPRVTSTGCSLGGLVAAYLAVTPTALDGLVAAHTHVAVASEIAEENASGPGSFAVAYLDALYTVNADTIRSRARIESFDLPAGVQN.

2 residues coordinate ATP: arginine 124 and serine 169.

The protein belongs to the Thz kinase family. It depends on Mg(2+) as a cofactor.

The enzyme catalyses 5-(2-hydroxyethyl)-4-methylthiazole + ATP = 4-methyl-5-(2-phosphooxyethyl)-thiazole + ADP + H(+). It functions in the pathway cofactor biosynthesis; thiamine diphosphate biosynthesis; 4-methyl-5-(2-phosphoethyl)-thiazole from 5-(2-hydroxyethyl)-4-methylthiazole: step 1/1. In terms of biological role, catalyzes the phosphorylation of the hydroxyl group of 4-methyl-5-beta-hydroxyethylthiazole (THZ). This chain is Hydroxyethylthiazole kinase, found in Rhodococcus erythropolis (strain PR4 / NBRC 100887).